The primary structure comprises 1000 residues: SEC23-interacting protein (1000 aa).

An interaction with SEC23A region spans residues 1-367 (MAERKPNGGS…YTEEFSEKLE (367 aa)). The tract at residues 133 to 252 (FSPSISKAQP…QQVPARPGAP (120 aa)) is disordered. Residues 154–167 (SYLPSQPSSLPPSY) are compositionally biased toward low complexity. The span at 207–218 (PGPPAHPPPSGP) shows a compositional bias: pro residues. Residues 235–246 (SSVQSPAQQQVP) show a composition bias toward low complexity. The SAM domain occupies 644–707 (KEVLTLQETL…NFVEHKAAKL (64 aa)). Residues 716–748 (AVAATSTKGQEQSAQKTKDMASLPSESNEPKRK) are disordered. A phosphoserine mark is found at S737 and S926. Residues 779-989 (LDFEPEIFFA…ALLLLKEIYR (211 aa)) enclose the DDHD domain.

Belongs to the PA-PLA1 family. In terms of assembly, interacts with SEC23A. In terms of tissue distribution, ubiquitously expressed with stronger levels detected in heart, liver and skeletal muscle.

Its subcellular location is the cytoplasmic vesicle. It is found in the COPII-coated vesicle membrane. The protein resides in the endoplasmic reticulum. Plays a role in the organization of endoplasmic reticulum exit sites. Specifically binds to phosphatidylinositol 3-phosphate (PI(3)P), phosphatidylinositol 4-phosphate (PI(4)P) and phosphatidylinositol 5-phosphate (PI(5)P). This chain is SEC23-interacting protein (SEC23IP), found in Homo sapiens (Human).